The sequence spans 520 residues: Zinc finger and BTB domain-containing protein 45 (520 aa).

The region spanning 33-96 (CDVTVRIREA…LYSGSLVVAQ (64 aa)) is the BTB domain. 2 disordered regions span residues 182 to 272 (PAPP…GGAG) and 337 to 372 (FHLGAPGPPAPTPPTPSGPAPAPPPTFYPTLQPDAA). The segment covering 206–225 (RGEEDDDEETDEETDAEEGE) has biased composition (acidic residues). Over residues 342–363 (PGPPAPTPPTPSGPAPAPPPTF) the composition is skewed to pro residues. 4 C2H2-type zinc fingers span residues 412-434 (YECSHCRKTFSSRKNYTKHMFIH), 440-462 (HQCAVCWRSFSLRDYLLKHMVTH), 468-490 (FQCAVCAKRFTQKSSLNVHMRTH), and 495-517 (APCPACGKVFSHRALLERHLAAH).

Belongs to the krueppel C2H2-type zinc-finger protein family.

The protein localises to the nucleus. Functionally, may be involved in transcriptional regulation. In the central nervous system, may play a role in glial cell differentiation. In Mus musculus (Mouse), this protein is Zinc finger and BTB domain-containing protein 45.